The following is a 233-amino-acid chain: 7-cyano-7-deazaguanine synthase (233 aa).

ATP is bound at residue 8 to 18; it reads FSGGQDSTTCL. Residues Cys-188, Cys-197, Cys-200, and Cys-203 each contribute to the Zn(2+) site.

Belongs to the QueC family. Zn(2+) serves as cofactor.

It carries out the reaction 7-carboxy-7-deazaguanine + NH4(+) + ATP = 7-cyano-7-deazaguanine + ADP + phosphate + H2O + H(+). It participates in purine metabolism; 7-cyano-7-deazaguanine biosynthesis. In terms of biological role, catalyzes the ATP-dependent conversion of 7-carboxy-7-deazaguanine (CDG) to 7-cyano-7-deazaguanine (preQ(0)). This is 7-cyano-7-deazaguanine synthase from Klebsiella pneumoniae (strain 342).